The primary structure comprises 214 residues: Ribosomal RNA small subunit methyltransferase G (214 aa).

Residues glycine 81, methionine 86, 132–133 (VE), and arginine 147 each bind S-adenosyl-L-methionine.

Belongs to the methyltransferase superfamily. RNA methyltransferase RsmG family.

The protein localises to the cytoplasm. It carries out the reaction guanosine(527) in 16S rRNA + S-adenosyl-L-methionine = N(7)-methylguanosine(527) in 16S rRNA + S-adenosyl-L-homocysteine. Functionally, specifically methylates the N7 position of guanine in position 527 of 16S rRNA. The chain is Ribosomal RNA small subunit methyltransferase G from Pseudomonas fluorescens (strain Pf0-1).